Here is a 446-residue protein sequence, read N- to C-terminus: GTPase Der (446 aa).

2 consecutive EngA-type G domains span residues 3–167 (PVLA…AFDE) and 180–353 (IRLA…ASAT). GTP contacts are provided by residues 9-16 (GRPNVGKS), 56-60 (DTGGF), 119-122 (NKAE), 186-193 (GRPNVGKS), 233-237 (DTAGL), and 298-301 (NKWD). The 85-residue stretch at 354 to 438 (KKLATPVLTR…PMRIEMKSSR (85 aa)) folds into the KH-like domain.

This sequence belongs to the TRAFAC class TrmE-Era-EngA-EngB-Septin-like GTPase superfamily. EngA (Der) GTPase family. Associates with the 50S ribosomal subunit.

Its function is as follows. GTPase that plays an essential role in the late steps of ribosome biogenesis. The chain is GTPase Der from Methylibium petroleiphilum (strain ATCC BAA-1232 / LMG 22953 / PM1).